A 272-amino-acid chain; its full sequence is ATP synthase subunit a (272 aa).

A run of 6 helical transmembrane segments spans residues 42–62 (IDSL…AGFV), 108–128 (FVWI…LPCI), 140–162 (ILPS…LMIF), 177–197 (LIYH…LEII), 219–239 (LIFI…LSVP), and 241–261 (AIFH…LTII).

This sequence belongs to the ATPase A chain family. As to quaternary structure, F-type ATPases have 2 components, CF(1) - the catalytic core - and CF(0) - the membrane proton channel. CF(1) has five subunits: alpha(3), beta(3), gamma(1), delta(1), epsilon(1). CF(0) has three main subunits: a(1), b(2) and c(9-12). The alpha and beta chains form an alternating ring which encloses part of the gamma chain. CF(1) is attached to CF(0) by a central stalk formed by the gamma and epsilon chains, while a peripheral stalk is formed by the delta and b chains.

It is found in the cell inner membrane. In terms of biological role, key component of the proton channel; it plays a direct role in the translocation of protons across the membrane. The polypeptide is ATP synthase subunit a (Blochmanniella floridana).